Consider the following 624-residue polypeptide: MLGKALLLLLSSPICALAQSAADYYVKSIPGQPDGPLLKMHAGHIEVDAQTNGHLFFWHFQNRHIANRQRTIIWLNGGPGCSSMDGALMEIGPYRVKDDHTLVYNNGSWDEFANLLFIDQPVGTGFSYVNTNSFLHDLDHVSSHMVTFLDKWFAMFPEYESDDLYIAGESWAGQYIPHIARAIVARNKNIDSKQQPWVLKGLLIGNGWISPLDQYPATMQYAYAEGLVKEGSSTATSLDAMNDACAQKLADPGSQNMIRIGQCESVLDSLMRLTRTSEEECVNMYDIRLKDASCGRTWPPDLDPMTRYLQRTEVRSALNLDREQTNSWTECNDQVGFNLRLENPGVPAVHLLPDLIESGVKILLFSGDRDLICNHLGTEQLIHNMKWSGGTGFETKPGVWAPRRDWTFEGDAAGYYQQARNLTYVLFYNASHMVPYDWPRRTRDMVDRFINVDIANIGGTPADSRLDGEKLPQTSVGNTTSSTSESDQVDQEKLKDAEWKAYAKSGEAALIVVIIGVSVWGFFIWRARQRASRGSSPSKKGYRSVYPGGSNNTSSSDGAGLLSRFRNNTNNNASSDLEARDFDEAELDSLSPGLQNARERDHYVIGEEDEEDEDIGNGAKSSLH.

The N-terminal stretch at 1–18 (MLGKALLLLLSSPICALA) is a signal peptide. Residues 19–504 (QSAADYYVKS…KDAEWKAYAK (486 aa)) lie on the Lumenal side of the membrane. Asn106 is a glycosylation site (N-linked (GlcNAc...) asparagine). Catalysis depends on residues Ser170 and Asp370. Asn421 and Asn429 each carry an N-linked (GlcNAc...) asparagine glycan. Residue His432 is part of the active site. The tract at residues 461–491 (PADSRLDGEKLPQTSVGNTTSSTSESDQVDQ) is disordered. Over residues 472-486 (PQTSVGNTTSSTSES) the composition is skewed to polar residues. N-linked (GlcNAc...) asparagine glycosylation occurs at Asn478. Residues 505–525 (SGEAALIVVIIGVSVWGFFIW) form a helical membrane-spanning segment. Topologically, residues 526 to 624 (RARQRASRGS…IGNGAKSSLH (99 aa)) are cytoplasmic. A disordered region spans residues 533–624 (RGSSPSKKGY…IGNGAKSSLH (92 aa)). The segment covering 565–575 (FRNNTNNNASS) has biased composition (polar residues). Acidic residues predominate over residues 606 to 615 (GEEDEEDEDI).

Belongs to the peptidase S10 family.

The protein localises to the golgi apparatus. It localises to the trans-Golgi network membrane. The catalysed reaction is Preferential release of a C-terminal arginine or lysine residue.. Functionally, protease with a carboxypeptidase B-like function involved in the C-terminal processing of the lysine and arginine residues from protein precursors. Promotes cell fusion and is involved in the programmed cell death. This Talaromyces stipitatus (strain ATCC 10500 / CBS 375.48 / QM 6759 / NRRL 1006) (Penicillium stipitatum) protein is Pheromone-processing carboxypeptidase kex1 (kex1).